The following is a 181-amino-acid chain: Translation initiation factor IF-3, chloroplastic (181 aa).

Belongs to the IF-3 family. Monomer.

It is found in the plastid. It localises to the chloroplast. IF-3 binds to the 30S ribosomal subunit and shifts the equilibrium between 70S ribosomes and their 50S and 30S subunits in favor of the free subunits, thus enhancing the availability of 30S subunits on which protein synthesis initiation begins. This is Translation initiation factor IF-3, chloroplastic from Galdieria sulphuraria (Red alga).